The primary structure comprises 593 residues: ETS-related transcription factor Elf-2 (593 aa).

Positions 1–34 are disordered; that stretch reads MASAVVDSGGSALELPSDGGENQEGGDTGPDCPA. Ser107 is subject to Phosphoserine. Residues 146–199 are disordered; that stretch reads VEVSTEESEPMDASPIPTSPDSHEPMKKKKVGRKPKTQQSPVSNGSPELGIKKK. Positions 171-181 are enriched in basic residues; sequence MKKKKVGRKPK. A Phosphothreonine modification is found at Thr182. The span at 182–191 shows a compositional bias: polar residues; it reads TQQSPVSNGS. A phosphoserine mark is found at Ser185 and Ser191. A DNA-binding region (ETS) is located at residues 208–290; that stretch reads TYLWEFLLDL…EGQRLVYQFK (83 aa). Residues 362–383 are disordered; the sequence is TSPTHDGSSRSPTTTAPVSAAA. Phosphoserine is present on residues Ser363 and Ser372. Residues 370–383 show a composition bias toward low complexity; the sequence is SRSPTTTAPVSAAA. Thr376 is subject to Phosphothreonine. Ser432 carries the post-translational modification Phosphoserine. Arg496 bears the Omega-N-methylarginine mark. Thr523 is subject to Phosphothreonine. Residue Lys538 forms a Glycyl lysine isopeptide (Lys-Gly) (interchain with G-Cter in SUMO2) linkage.

It belongs to the ETS family. Interacts with LIM domains of LMO2. Interacts via its N-terminal region with RUNX1. In terms of tissue distribution, expressed in all tissues examined. Highest levels in thymocytes and bone marrow.

The protein localises to the nucleus. Functionally, probably transcriptionally activates the LYN and BLK promoters and acts synergistically with RUNX1 to transactivate the BLK promoter. The sequence is that of ETS-related transcription factor Elf-2 from Mus musculus (Mouse).